The primary structure comprises 857 residues: MTDSEETVLYVEHRYVCSECGEEYPSLEEALEHQQSHAAALQEPQYQIVGVNSLENQYQCLECGLLLRTPEDLLAHQELHPTQNEIQKPKRPTRSEIHYECPECKALFNSQDVWMAHRYTHMQVQDVSHSKIVLQTDDHVIEDGLQLMCAPAVPSEVHLVTGDPHFHVSTPSSASVSHTQVLVDLEHSYKKNEGAGEDCAMELLLYKCSECTQLFQTPGEFLEHQGTHFSGQERISDTNSHLDQTPQLSLNGQEKEPIINQGNTCTDYQAENKELLVQPEGEQAEQDSWTVDREPVFSCGDCSETFQTTKDLEEHQISHQNGPFSCPLCSKVFPTYPEVGEHLKSHRSESRYLCVDCGLAFVSEAVLLNHRRSHLANPLFTCECGLTFLNMTRFLYHRRVHSSKQPDTGAVEEKKTVNSIAPSPAGNFHCDPCGKDFPLLSQFLRHQRFVHALERRHKCPTCGKHFKKGSHLRTHMLTHTGERPYSCTVCSKSFNSQANLLRHRLTHTGEKPYKCQLCGKAFSQSSTLQQHQYVHGQAYLYKCNECGINFHRPYRLLLHQYHHTGEYPYKCQDCGLSFLLKRLLEVHQLGHRGEEPHRCRECGTNFPSVQRLQDHRCSKAGDGGGEKLECPICGKKVTSDAHLNTHVAAQHSGNKRSNVSSGKGTPVLPRNKLKGGGGKNLECSDCHKTFSTETSLQVHRRIHTGERPYPCPDCGKAFRQSTHLKDHRRLHTGEKPFKCDVCGKAFTIAVRLSEHKRIHTGERPHSCPDCGRAYRSFSNLWKHRKLHREQQVQLQEPESQPADLSSTVAILETVETIPIIETVEIFPEGSTISVQDIQFETLQVENIHLGNIQIGTL.

14 C2H2-type zinc fingers span residues 15 to 37 (YVCS…QQSH), 58 to 80 (YQCL…QELH), 99 to 121 (YECP…RYTH), 206 to 228 (YKCS…QGTH), 297 to 319 (FSCG…QISH), 324 to 346 (FSCP…LKSH), 352 to 374 (YLCV…RRSH), 380 to 401 (FTCE…RRVH), 428 to 451 (FHCD…RFVH), 457 to 479 (HKCP…MLTH), 485 to 507 (YSCT…RLTH), 513 to 535 (YKCQ…QYVH), 541 to 563 (YKCN…QYHH), and 569 to 591 (YKCQ…QLGH). The segment at 597 to 619 (HRCRECGTNFPSVQRLQDHRCSK) adopts a C2H2-type 15; degenerate zinc-finger fold. 5 consecutive C2H2-type zinc fingers follow at residues 628 to 651 (LECP…AAQH), 681 to 703 (LECS…RRIH), 709 to 731 (YPCP…RRLH), 737 to 759 (FKCD…KRIH), and 765 to 787 (HSCP…RKLH). Residues 648–678 (AAQHSGNKRSNVSSGKGTPVLPRNKLKGGGG) are disordered. Over residues 651-663 (HSGNKRSNVSSGK) the composition is skewed to polar residues.

Belongs to the krueppel C2H2-type zinc-finger protein family.

Its subcellular location is the nucleus. Functionally, may be involved in transcriptional regulation. This Xenopus tropicalis (Western clawed frog) protein is Zinc finger protein 574 (znf574).